We begin with the raw amino-acid sequence, 288 residues long: ATP synthase gamma chain (288 aa).

Belongs to the ATPase gamma chain family. As to quaternary structure, F-type ATPases have 2 components, CF(1) - the catalytic core - and CF(0) - the membrane proton channel. CF(1) has five subunits: alpha(3), beta(3), gamma(1), delta(1), epsilon(1). CF(0) has three main subunits: a, b and c.

The protein resides in the cell inner membrane. In terms of biological role, produces ATP from ADP in the presence of a proton gradient across the membrane. The gamma chain is believed to be important in regulating ATPase activity and the flow of protons through the CF(0) complex. The protein is ATP synthase gamma chain of Rickettsia bellii (strain OSU 85-389).